Here is a 3343-residue protein sequence, read N- to C-terminus: MTVEYKRRPTFWEIFKARCSTADLGPISLNWFEELFSEAPPYNTEHPEESEYKPQGHEPQLFKTPQRNPSYHQFASTPIMFKEQSQTLPLDQSPFKELGNVVANSKRKHHSKKKARKDPVVDVASLPLKACPSESPCTPRCTQVAPQRRKPVVSGSLFYTPKLEETPKHISESLGVEVDPDMSWTSSLATPPTLSSTVLIARDEEAHRNAFPADSPASLKSYFSNHNESLKKNDRFIPSVSDSENKSQQEAFSQGLEKMLGDSSSKINRFRDCLRKPIPNVLEDGETAVDTSGEDSFSLCFPKRRTRNLQKTRMGKMKKKIFSETRTDGLSEEARGQADDKNSFALEIEPRDSEPLDPSVTNQKPLYSQSGDISSEAGQCSDSIWSQPDPSGLNGTQTRKIPLLHISFHKQSILEDFIDMKKEGTGSITFPHISSLPEPEKMFSEETLVDKEHEGQHLESLEDSISGKQMVSGTSQTACLSPSIRKSIVKMREPLEETLDTVFSDSMTSSAFTEELDASAGGLEIHTACSQREDSLCPSSVDTGSWPTTLTDTSATVKNAGLITTLKNKRRKFIYSVSDDASHQGKKLQTQRQSELTNLSAPFEASAFEVPFPFTNVDSGIPDSSIKRSNLPNDPEEPSLSLTNSFVTAASKEISYIHALISQDLNDKEAILSEEKPQPYTALEADFLSCLPERSCENDQKSPKVSDRKEKVLVSACRPSGRLAAAVQLSSISFDSQENPLGSHNVTSTLKLTPSPKTPLSKPVVVSRGKMCKMPEKLQCKSCKDNIELSKNIPLGVNEMCVLSENSETPELLPPLEYITEVSSSVKSQFNQNTKIAVVQKDQKDSTFISEVTVHMNSEELFPEKENNFAFQVTNESNKPNIGSTVEFQEEDLSHAKGHSLKNSPMTVDRDLDDEQAGQVLITEDSDSLAVVHDCTKKSRNTIEQHQKGTADKDFKSNSSLYLKSDGNNDYLDKWSEFLDPLMNHKLGGSFRTASNKEIKLSEDNVKKSKMFFKDIEEQYPTSLDCIDTVSTLQLANKKRLSEPHTFDLKSGTTVSTQCHSQSSVSHEDTHTAPQMLSSKQDFHSSHNLTPSQKAEITELSTILEESGSQFEFTQFKNPSHIAQNNTSAVLGNQMAVVRTASEEWKDVDLHLPLNPSSVGQIDHNKKFECLVGVKQSSSHLLEDTCNQNTSCFLPIKEMEFGGFCSALGTKLSVSNEALRKAMKLFSDIENISEEPSTKVGPRGFSSCAHHDSVASVFKIKKQNTDKSFDEKSSKCQVTVQNNKEMTTCILVDENPENYVKNIKQDNNYTGSQRNAYKLENSDVSKSSTSGTVYINKGDSDLPFAAEKGNKYPESCTQYVREENAQIKESVSDLTCLEVMKAEETCHMKSSDKEQLPSDKMEQNMKEFNISFQTASGKNIRVSKESLNKSVNILDQETEDLTVTSDSLNSKILCGINKDKMHISCHKKSINIKKVFEEHFPIGTVSQLPALQQYPEYEIESIKEPTLLSFHTASGKKVKIMQESLDKVKNLFDETQYVRKTTNFGHQESKPLKDREDYKERLTLAYEKIEVTASKCEEMQNFVSKQTEMLPQQNDHMYRQTENLTSNGSSPKVHGNIENKIEKNPRICCICQSSYFVTEDSALACYTGDSRKTCVGESSLSKGKKWLREQSDKLGTRNTIEIQCVKEHTEDFAGNALYEHSLVIIRTEIDTSHVSENQASTLFSDPNVCHSYLSHSSFCHHDDMHNDSGYFLKDKIDSDVQPDMKNTEGNAIFPKISATKEIKLHPQTVNEECVQKLETNASPYANKNIAIDSAMLDLRNCKVGSPVFITTHSQETVRMKEIFTDNCSKIVEQNRESKPDTCQTSCHKALDNSEDFICPSSSGDVCINSPMAIFYPQSEQILQHNQSVSGLKKAATPPVSLETWDTCKSIRGSPQEVHPSRTYGFFSTASGKAVQVSDASLEKARQVFSEIDGDAKQLASMVSLEGNEKSHHSVKRESSVVHNTHGVLSLRKTLPGNVSSFVFSGFSTAGGKLVTVSESALHKVKGMLEEFDLIRTEHTLQHSPTPEDVSKIPPQPCLESRTPEYSVSSKLQKTYNDKSRSPSNYKESGSSGNTQSLEVSPQLSQMERKQETQSVLGTKVSQRKTNILEKKQNLPQNIKIESNKMETFSDVSMKTNVGEYYSKEPENYFETEAVEIAKAFMEDDELTDSEQTHAKCSLFACPQNEALLNSRTRKRGGMAGVAVGQPPIKRSLLNEFDRIIESKGKSLTPSKSTPDGTIKDRRLFTHHMSLEPVTCGPFCSSKERQETQSPHVTSPAQGLQSKEHPSRHSAVGKSSSNPTVSALRSERTRHSVSDKSTKVFVPPFKVKSRFHRDEHFDSKNVNLEGKNQKSADGVSEDGNDSDFPQFNKDLMSSLQNARDLQDIRIKNKERHHLCPQPGSLYLTKSSTLPRISLQAAVGDSVPSACSPKQLYMYGVSKACISVNSKNAEYFQFAIEDHFGKEALCAGKGFRLADGGWLIPSDDGKAGKEEFYRALCDTPGVDPKLISSVWVSNHYRWIVWKLAAMEFAFPKEFANRCLNPERVLLQLKYRYDVEIDNSSRSALKKILERDDTAAKTLVLCVSDIISLSTNVSETSGSKASSEDSNKVDTIELTDGWYAVKAQLDPPLLALVKSGRLTVGQKIITQGAELVGSPDACAPLEAPDSLRLKISANSTRPARWHSKLGFFHDPRPFPLPLSSLFSDGGNVGCVDVIVQRVYPLQWVEKTVSGSYIFRNEREEEKEALRFAEAQQKKLEALFTKVHTELKEHEEDIAQRRVLSRALTRQQVHALQDGAELYAAVQDASDPEHLETCFSEEQLRALNNYRQMLSDKKQARIQSEFRKALEAAEKEEGLSRDVSTVWKLRVTSYKKREKSALLSIWRPSSDLPSLLTEGQRYRIYHLSVSKSKNKFEWPSIQLTATKRTQYQQLPVSSETLLQLYQPRELLPFSKLSDPAFQPPCSEVDVVGVVVSVVKPIGLAPLVYLSDECLHLLVVKFGIDLNEDIKPRVLIAASNLQWRPESTSRVPTLFAGNFSVFSASPKEAHFQERVTNMKHAIENIDTFYKEAEKKLIQVLKGDSPKWSTPNKDPTREPYPASTCSASDLASGGQLPRSSPTDQQSYRSPLSCCTPTGKSTPLAHSAWMAAKSCSGENEIEDPKTCRKKRALDLLSRLPLPPPLSPVCTFVSPAAQKAFQPPRSCGTKYPTPLKKEGPSSPWSRAPFQKASGVSLLDCDSVADEELALLSTQALVPHSVGGSEQVFPSDSTRTEGPSASTEARPANRSKRESLRDCRDDSDGKLAAETVPDYS.

Positions 1–40 are interaction with PALB2; it reads MTVEYKRRPTFWEIFKARCSTADLGPISLNWFEELFSEAP. A disordered region spans residues 40 to 60; that stretch reads PPYNTEHPEESEYKPQGHEPQ. The segment covering 45–56 has biased composition (basic and acidic residues); the sequence is EHPEESEYKPQG. Position 70 is a phosphoserine (S70). The tract at residues 348 to 381 is disordered; the sequence is IEPRDSEPLDPSVTNQKPLYSQSGDISSEAGQCS. A compositionally biased stretch (polar residues) spans 359–381; that stretch reads SVTNQKPLYSQSGDISSEAGQCS. 2 positions are modified to phosphoserine: S475 and S736. The tract at residues 622 to 982 is interaction with NPM1; sequence PDSSIKRSNL…DKWSEFLDPL (361 aa). 8 BRCA2 repeats span residues 984 to 1018, 1197 to 1231, 1405 to 1439, 1503 to 1537, 1645 to 1669, 1828 to 1845, 1939 to 1973, and 2019 to 2053; these read NHKL…DIEE, KEME…DIEN, MKEF…QETE, KEPT…ETQY, CYTG…WLRE, FITT…IFTD, PSRT…EIDG, and SSFV…EFDL. The tract at residues 985–2050 is interaction with RAD51; sequence HKLGGSFRTA…LHKVKGMLEE (1066 aa). 3 disordered regions span residues 2059–2138, 2297–2356, and 2377–2407; these read TLQH…VLGT, PFCS…SDKS, and DSKN…PQFN. Residue S2063 is modified to Phosphoserine. 2 stretches are compositionally biased toward polar residues: residues 2083–2094 and 2101–2125; these read PEYSVSSKLQKT and SPSN…QLSQ. The segment at 2233-2300 is interaction with HSF2BP; sequence RKRGGMAGVA…EPVTCGPFCS (68 aa). 2 stretches are compositionally biased toward polar residues: residues 2307–2320 and 2332–2342; these read TQSP…QGLQ and GKSSSNPTVSA. Residues 2313 to 2475 are interaction with FANCD2; it reads TSPAQGLQSK…SPKQLYMYGV (163 aa). The segment covering 2344-2356 has biased composition (basic and acidic residues); it reads RSERTRHSVSDKS. Residues 2411-2762 are interaction with SEM1; that stretch reads MSSLQNARDL…QRVYPLQWVE (352 aa). Residues 2612 to 2628 carry the Nuclear export signal; masked by interaction with SEM1 motif; that stretch reads AAKTLVLCVSDIISLST. A disordered region spans residues 3114 to 3163; it reads DSPKWSTPNKDPTREPYPASTCSASDLASGGQLPRSSPTDQQSYRSPLSC. A compositionally biased stretch (polar residues) spans 3147 to 3163; sequence PRSSPTDQQSYRSPLSC. Phosphoserine; by CDK1 and CDK2 is present on S3222. Disordered regions lie at residues 3231-3255 and 3289-3343; these read PPRS…WSRA and VGGS…PDYS. S3250 is subject to Phosphoserine. A compositionally biased stretch (polar residues) spans 3295-3310; it reads VFPSDSTRTEGPSAST. The span at 3318–3334 shows a compositional bias: basic and acidic residues; the sequence is SKRESLRDCRDDSDGKL.

As to quaternary structure, monomer and dimer. Interacts with RAD51; regulates RAD51 recruitment and function at sites of DNA repair. Interacts with SEM1, WDR16, USP11, DMC1, ROCK2 and NPM1. Interacts with both nonubiquitinated and monoubiquitinated FANCD2; this complex also includes XRCC3 and phosphorylated FANCG. Part of a BRCA complex containing BRCA1, BRCA2 and PALB2. Component of the homologous recombination repair (HR) complex composed of ERCC5/XPG, BRCA2, PALB2, DSS1 and RAD51. Within the complex, interacts with ERCC5/XPG and PALB2. Interacts directly with PALB2 which may serve as a scaffold for a HR complex containing PALB2, BRCA2, RAD51C, RAD51 and XRCC3. Interacts with BRCA1 only in the presence of PALB2 which serves as the bridging protein. Interacts with POLH; the interaction is direct. Interacts with the TREX-2 complex subunits PCID2 and SEM1. Interacts with HSF2BP and BRME1; the interaction with HSF2BP is direct and allows the formation of a ternary complex. The complex BRME1:HSF2BP:BRCA2 interacts with SPATA22, MEIOB and RAD51. In terms of processing, phosphorylated by ATM upon irradiation-induced DNA damage. Phosphorylation by CHEK1 and CHEK2 regulates interaction with RAD51. Phosphorylation at Ser-3222 by CDK1 and CDK2 is low in S phase when recombination is active, but increases as cells progress towards mitosis; this phosphorylation prevents homologous recombination-dependent repair during S phase and G2 by inhibiting RAD51 binding. Ubiquitinated in the absence of DNA damage; this does not lead to proteasomal degradation. In contrast, ubiquitination in response to DNA damage leads to proteasomal degradation. In terms of tissue distribution, highest expression in testis. Also expressed in spleen, skeletal muscle, thymus, mammary gland, heart, ovary, prostate, liver, lung, kidney and brain.

It localises to the nucleus. The protein resides in the cytoplasm. It is found in the cytoskeleton. Its subcellular location is the microtubule organizing center. The protein localises to the centrosome. Functionally, involved in double-strand break repair and/or homologous recombination. Binds RAD51 and potentiates recombinational DNA repair by promoting assembly of RAD51 onto single-stranded DNA (ssDNA). Acts by targeting RAD51 to ssDNA over double-stranded DNA, enabling RAD51 to displace replication protein-A (RPA) from ssDNA and stabilizing RAD51-ssDNA filaments by blocking ATP hydrolysis. Part of a PALB2-scaffolded HR complex containing RAD51C and which is thought to play a role in DNA repair by HR. May participate in S phase checkpoint activation. Binds selectively to ssDNA, and to ssDNA in tailed duplexes and replication fork structures. May play a role in the extension step after strand invasion at replication-dependent DNA double-strand breaks; together with PALB2 is involved in both POLH localization at collapsed replication forks and DNA polymerization activity. In concert with NPM1, regulates centrosome duplication. Interacts with the TREX-2 complex (transcription and export complex 2) subunits PCID2 and SEM1, and is required to prevent R-loop-associated DNA damage and thus transcription-associated genomic instability, independently of its known role in homologous recombination. This is Breast cancer type 2 susceptibility protein homolog from Rattus norvegicus (Rat).